Reading from the N-terminus, the 245-residue chain is 14-3-3 protein theta (245 aa).

M1 bears the N-acetylmethionine mark. K3 is modified (N6-acetyllysine). Residue K49 is modified to N6-acetyllysine; alternate. A Glycyl lysine isopeptide (Lys-Gly) (interchain with G-Cter in SUMO2); alternate cross-link involves residue K49. N6-acetyllysine is present on K68. A 3'-nitrotyrosine modification is found at Y82. Phosphoserine is present on S92. At Y104 the chain carries 3'-nitrotyrosine. Position 115 is an N6-acetyllysine (K115). S232 carries the phosphoserine; by CK1 modification.

It belongs to the 14-3-3 family. Homodimer. Interacts with CDKN1B ('Thr-198' phosphorylated form); the interaction translocates CDKN1B to the cytoplasm. Interacts with SSH1. Interacts with GAB2. Interacts with RGS7 (phosphorylated form). Interacts with CDK16. Interacts with the 'Ser-241' phosphorylated form of PDPK1. Interacts with the 'Thr-369' phosphorylated form of DAPK2. Interacts with PI4KB, TBC1D22A and TBC1D22B. Interacts with SLITRK1. Interacts with RIPOR2. Interacts with INAVA; the interaction increases upon PRR (pattern recognition receptor) stimulation and is required for cellular signaling pathway activation and cytokine secretion. Interacts with MARK2, MARK3 and MARK4. Interacts with MEFV.

The protein localises to the cytoplasm. Adapter protein implicated in the regulation of a large spectrum of both general and specialized signaling pathways. Binds to a large number of partners, usually by recognition of a phosphoserine or phosphothreonine motif. Binding generally results in the modulation of the activity of the binding partner. Negatively regulates the kinase activity of PDPK1. The sequence is that of 14-3-3 protein theta (Ywhaq) from Mus musculus (Mouse).